A 150-amino-acid chain; its full sequence is Large ribosomal subunit protein bL9 (150 aa).

This sequence belongs to the bacterial ribosomal protein bL9 family.

Functionally, binds to the 23S rRNA. The polypeptide is Large ribosomal subunit protein bL9 (Alkalilimnicola ehrlichii (strain ATCC BAA-1101 / DSM 17681 / MLHE-1)).